Here is a 292-residue protein sequence, read N- to C-terminus: Complex I assembly factor TIMMDC1, mitochondrial (292 aa).

Transmembrane regions (helical) follow at residues Trp146–Arg168 and Gly195–Leu215.

The protein belongs to the Tim17/Tim22/Tim23 family. As to quaternary structure, associates with the intermediate 315 kDa subcomplex of incompletely assembled complex I.

The protein resides in the mitochondrion membrane. Functionally, chaperone protein involved in the assembly of the mitochondrial NADH:ubiquinone oxidoreductase complex (complex I). Participates in constructing the membrane arm of complex I. The chain is Complex I assembly factor TIMMDC1, mitochondrial (timmdc1) from Danio rerio (Zebrafish).